Here is a 113-residue protein sequence, read N- to C-terminus: Large ribosomal subunit protein bL19 (113 aa).

It belongs to the bacterial ribosomal protein bL19 family.

Functionally, this protein is located at the 30S-50S ribosomal subunit interface and may play a role in the structure and function of the aminoacyl-tRNA binding site. The polypeptide is Large ribosomal subunit protein bL19 (Mycobacterium sp. (strain JLS)).